Reading from the N-terminus, the 298-residue chain is Acetylglutamate kinase (298 aa).

Residues 69 to 70, arginine 91, and asparagine 191 contribute to the substrate site; that span reads GG.

Belongs to the acetylglutamate kinase family. ArgB subfamily.

It is found in the cytoplasm. The catalysed reaction is N-acetyl-L-glutamate + ATP = N-acetyl-L-glutamyl 5-phosphate + ADP. It functions in the pathway amino-acid biosynthesis; L-arginine biosynthesis; N(2)-acetyl-L-ornithine from L-glutamate: step 2/4. Catalyzes the ATP-dependent phosphorylation of N-acetyl-L-glutamate. The protein is Acetylglutamate kinase of Neisseria meningitidis serogroup C / serotype 2a (strain ATCC 700532 / DSM 15464 / FAM18).